A 570-amino-acid chain; its full sequence is Phosphoribosylaminoimidazole carboxylase (570 aa).

The 188-residue stretch at 110–297 folds into the ATP-grasp domain; sequence KQHLVKNRIP…QFEAHLRAIL (188 aa). 137-192 contacts ATP; sequence GSSLGYPFVLKSRTLAYDGRGNFVVKSEEDIEKGLEFLANRPLYAEKWASFKKELS.

It in the C-terminal section; belongs to the AIR carboxylase family. Class I subfamily.

It catalyses the reaction 5-amino-1-(5-phospho-D-ribosyl)imidazole-4-carboxylate + H(+) = 5-amino-1-(5-phospho-beta-D-ribosyl)imidazole + CO2. It participates in purine metabolism; IMP biosynthesis via de novo pathway; 5-amino-1-(5-phospho-D-ribosyl)imidazole-4-carboxylate from 5-amino-1-(5-phospho-D-ribosyl)imidazole (carboxylase route): step 1/1. The chain is Phosphoribosylaminoimidazole carboxylase (ADE2) from Candida glabrata (strain ATCC 2001 / BCRC 20586 / JCM 3761 / NBRC 0622 / NRRL Y-65 / CBS 138) (Yeast).